Here is a 208-residue protein sequence, read N- to C-terminus: Flavin-dependent thymidylate synthase (208 aa).

A ThyX domain is found at 1–208 (MEVICKHYTP…QYLFEDCLKH (208 aa)). Residues Ser50 and 74–76 (RHR) each bind FAD. DUMP-binding positions include 71–74 (ELSR), 84–86 (SSR), and Lys147. The ThyX motif motif lies at 74-84 (RHRIASLSVKS). Residues 163–165 (NAR) and Asn169 contribute to the FAD site. Arg174 serves as a coordination point for dUMP. Arg174 acts as the Involved in ionization of N3 of dUMP, leading to its activation in catalysis.

Belongs to the thymidylate synthase ThyX family. As to quaternary structure, homotetramer. FAD is required as a cofactor.

The catalysed reaction is dUMP + (6R)-5,10-methylene-5,6,7,8-tetrahydrofolate + NADPH + H(+) = dTMP + (6S)-5,6,7,8-tetrahydrofolate + NADP(+). It functions in the pathway pyrimidine metabolism; dTTP biosynthesis. Functionally, catalyzes the reductive methylation of 2'-deoxyuridine-5'-monophosphate (dUMP) to 2'-deoxythymidine-5'-monophosphate (dTMP) while utilizing 5,10-methylenetetrahydrofolate (mTHF) as the methyl donor, and NADPH and FADH(2) as the reductant. In Helicobacter pylori (strain J99 / ATCC 700824) (Campylobacter pylori J99), this protein is Flavin-dependent thymidylate synthase.